We begin with the raw amino-acid sequence, 160 residues long: Cytochrome b6-f complex subunit 4 (160 aa).

Helical transmembrane passes span 36-56 (LLYIFPVVILGTIACTIGLAV), 95-115 (LLGVLLMASVPVGLLTVPFLE), and 131-151 (TVFLIGTAVAIWLGIGAALPI).

The protein belongs to the cytochrome b family. PetD subfamily. As to quaternary structure, the 4 large subunits of the cytochrome b6-f complex are cytochrome b6, subunit IV (17 kDa polypeptide, petD), cytochrome f and the Rieske protein, while the 4 small subunits are petG, petL, petM and petN. The complex functions as a dimer.

The protein localises to the plastid. The protein resides in the chloroplast thylakoid membrane. Functionally, component of the cytochrome b6-f complex, which mediates electron transfer between photosystem II (PSII) and photosystem I (PSI), cyclic electron flow around PSI, and state transitions. In Chara vulgaris (Common stonewort), this protein is Cytochrome b6-f complex subunit 4.